The following is a 207-amino-acid chain: Uracil phosphoribosyltransferase (207 aa).

5-phospho-alpha-D-ribose 1-diphosphate contacts are provided by residues R77, R102, and 129 to 137; that span reads DPMLATGGS. Uracil-binding positions include I192 and 197–199; that span reads GDA. D198 lines the 5-phospho-alpha-D-ribose 1-diphosphate pocket.

The protein belongs to the UPRTase family. The cofactor is Mg(2+).

It catalyses the reaction UMP + diphosphate = 5-phospho-alpha-D-ribose 1-diphosphate + uracil. It functions in the pathway pyrimidine metabolism; UMP biosynthesis via salvage pathway; UMP from uracil: step 1/1. With respect to regulation, allosterically activated by GTP. Catalyzes the conversion of uracil and 5-phospho-alpha-D-ribose 1-diphosphate (PRPP) to UMP and diphosphate. The sequence is that of Uracil phosphoribosyltransferase from Ureaplasma urealyticum serovar 10 (strain ATCC 33699 / Western).